Consider the following 347-residue polypeptide: Microneme protein 21 (347 aa).

It is found in the cytoplasmic vesicle. The protein localises to the secretory vesicle. It localises to the microneme. The protein resides in the secreted. This Toxoplasma gondii protein is Microneme protein 21.